We begin with the raw amino-acid sequence, 320 residues long: Malate dehydrogenase (320 aa).

NAD(+) contacts are provided by residues 10–15 (GSGMIG) and D34. Residues R83 and R89 each coordinate substrate. NAD(+) contacts are provided by residues N96 and 119–121 (ITN). N121 and R152 together coordinate substrate. The active-site Proton acceptor is H176.

Belongs to the LDH/MDH superfamily. MDH type 3 family.

It carries out the reaction (S)-malate + NAD(+) = oxaloacetate + NADH + H(+). Its function is as follows. Catalyzes the reversible oxidation of malate to oxaloacetate. The chain is Malate dehydrogenase from Bartonella quintana (strain Toulouse) (Rochalimaea quintana).